The following is a 330-amino-acid chain: Daunorubicin/doxorubicin resistance ATP-binding protein DrrA (330 aa).

The 231-residue stretch at 9 to 239 (IETSGLVKVY…LGSNVLRLRL (231 aa)) folds into the ABC transporter domain. 41–48 (GPNGAGKS) contacts ATP.

It belongs to the ABC transporter superfamily. Drug exporter-1 (DrugE1) (TC 3.A.1.105) family. As to quaternary structure, the complex is composed of two ATP-binding proteins (DrrA) and two transmembrane proteins (DrrB).

The protein resides in the cell membrane. The enzyme catalyses daunorubicin(in) + ATP + H2O = daunorubicin(out) + ADP + phosphate + H(+). Functionally, part of the ABC transporter complex DrrAB involved in daunorubicin and doxorubicin resistance. Responsible for energy coupling to the transport system. Binds ATP or GTP. In Streptomyces peucetius, this protein is Daunorubicin/doxorubicin resistance ATP-binding protein DrrA (drrA).